The primary structure comprises 851 residues: DNA mismatch repair protein MutS (851 aa).

614–621 is an ATP binding site; sequence GPNMGGKS.

Belongs to the DNA mismatch repair MutS family.

Functionally, this protein is involved in the repair of mismatches in DNA. It is possible that it carries out the mismatch recognition step. This protein has a weak ATPase activity. The polypeptide is DNA mismatch repair protein MutS (Photorhabdus laumondii subsp. laumondii (strain DSM 15139 / CIP 105565 / TT01) (Photorhabdus luminescens subsp. laumondii)).